Here is a 279-residue protein sequence, read N- to C-terminus: Large ribosomal subunit protein uL2 (279 aa).

A disordered region spans residues 223-279 (TVRGSAMNPNDHPHGGGEGRSPVGMDAPRTPWGKRHMGVKTRNNKKSSTSMIVRRRK). Residues 254–267 (WGKRHMGVKTRNNK) are compositionally biased toward basic residues.

This sequence belongs to the universal ribosomal protein uL2 family. Part of the 50S ribosomal subunit. Forms a bridge to the 30S subunit in the 70S ribosome.

Its function is as follows. One of the primary rRNA binding proteins. Required for association of the 30S and 50S subunits to form the 70S ribosome, for tRNA binding and peptide bond formation. It has been suggested to have peptidyltransferase activity; this is somewhat controversial. Makes several contacts with the 16S rRNA in the 70S ribosome. The sequence is that of Large ribosomal subunit protein uL2 from Ureaplasma urealyticum serovar 10 (strain ATCC 33699 / Western).